The sequence spans 1208 residues: Neural cell adhesion molecule L1-like protein (1208 aa).

The first 24 residues, 1–24 (MEPLLLGRGLIVYLMFLLLKFSKA), serve as a signal peptide directing secretion. The Extracellular portion of the chain corresponds to 25-1082 (IEIPSSVQQV…LYDDISTQGW (1058 aa)). Ig-like C2-type domains follow at residues 35 to 124 (PTII…EEIE) and 128 to 223 (PSVP…MKLT). Intrachain disulfides connect Cys-57–Cys-109 and Cys-153–Cys-204. N-linked (GlcNAc...) asparagine glycans are attached at residues Lys-231 and Asn-299. Ig-like C2-type domains lie at 235 to 328 (PKLL…VIVE), 331 to 417 (PRWT…ANID), 423 to 510 (PLIQ…ANLD), and 515 to 607 (TKLR…TQVT). Intrachain disulfides connect Cys-262–Cys-310, Cys-352–Cys-401, Cys-445–Cys-494, and Cys-536–Cys-591. Asn-476 and Asn-482 each carry an N-linked (GlcNAc...) asparagine glycan. Residues 555 to 558 (DGEA) carry the DGEA motif. N-linked (GlcNAc...) asparagine glycans are attached at residues Asn-562 and Asn-580. Fibronectin type-III domains follow at residues 614–709 (PPEN…TPPA), 714–807 (NPQN…SGED), 809–914 (PDTA…TPEG), and 918–1015 (QPTF…LGEG). The segment at 693 to 716 (GRSQPSQPSDHHETPPAAPDRNPQ) is disordered. 4 N-linked (GlcNAc...) asparagine glycosylation sites follow: Asn-767, Asn-822, Asn-945, and Asn-1026. The chain crosses the membrane as a helical span at residues 1083-1103 (FIGLMCAIALLTLLLLTVCFV). Topologically, residues 1104–1208 (KRNRGGKYSV…SSTATFPLRA (105 aa)) are cytoplasmic. Residues 1131 to 1163 (ETFGEYSDSDEKPLKGSLRSLNRDMQPTESADS) form a disordered region. Ser-1147, Ser-1160, and Ser-1180 each carry phosphoserine. Polar residues predominate over residues 1149-1161 (RSLNRDMQPTESA). The FIG[AQ]Y motif lies at 1181–1185 (FIGAY). The segment at 1189 to 1208 (KEKGSVESNGSSTATFPLRA) is disordered. Positions 1194-1208 (VESNGSSTATFPLRA) are enriched in polar residues.

The protein belongs to the immunoglobulin superfamily. L1/neurofascin/NgCAM family. May interact with L1CAM. May interact with ITGB1/ITGA1 heterodimer and ITGB1/ITGA2 heterodimer as well as with ANK3. Cleavage by metalloprotease ADAM8 in the extracellular part generates 2 soluble forms (125 kDa and 165 kDa) in vitro and is inhibited by metalloprotease inhibitors. Cleaved by BACE1. Post-translationally, N-glycosylated. Contains N-linked oligosaccharides with a sulfated carbohydrate structure type HNK-1 (SO4-3-GlcUABeta1,3GalBeta1,4GlcNAc). In terms of processing, O-glycosylated. In terms of tissue distribution, expressed in the fetal and adult brain as well as in Schwann cell culture. Also detected in adult peripheral tissues.

Its subcellular location is the cell membrane. The protein resides in the secreted. It localises to the extracellular space. The protein localises to the extracellular matrix. Extracellular matrix and cell adhesion protein that plays a role in nervous system development and in synaptic plasticity. Both soluble and membranous forms promote neurite outgrowth of cerebellar and hippocampal neurons and suppress neuronal cell death. Plays a role in neuronal positioning of pyramidal neurons and in regulation of both the number of interneurons and the efficacy of GABAergic synapses. May play a role in regulating cell migration in nerve regeneration and cortical development. Potentiates integrin-dependent cell migration towards extracellular matrix proteins. Recruits ANK3 to the plasma membrane. This chain is Neural cell adhesion molecule L1-like protein (CHL1), found in Homo sapiens (Human).